A 423-amino-acid polypeptide reads, in one-letter code: SH2 domain-containing adapter protein F (423 aa).

Disordered stretches follow at residues 1-87 (MQQE…STTR), 110-208 (DPFD…WEWK), and 225-312 (DLPW…GEWT). Acidic residues predominate over residues 192–203 (EDDERPPEEYDQ). Residue tyrosine 201 is modified to Phosphotyrosine. The 96-residue stretch at 323 to 418 (WYHGAISRTD…AEHMSLLYPV (96 aa)) folds into the SH2 domain.

Interacts with phosphorylated 'Tyr-720' of PDGFRA via its SH2 domain. May become phosphorylated upon binding to PDGFRA. In terms of tissue distribution, expressed in skeletal muscle, brain, liver, prostate, testis, ovary, small intestine and colon.

Its function is as follows. Adapter protein which may play a role in the regulation of apoptosis in response to PDGF. The chain is SH2 domain-containing adapter protein F from Homo sapiens (Human).